Consider the following 384-residue polypeptide: S-adenosylmethionine synthase (384 aa).

Residue His15 participates in ATP binding. A Mg(2+)-binding site is contributed by Asp17. Glu43 provides a ligand contact to K(+). L-methionine is bound by residues Glu56 and Gln99. The tract at residues 99–109 (QSADINQGVDR) is flexible loop. ATP-binding positions include 164-166 (DAK), 230-231 (RF), Asp239, 245-246 (RK), Ala262, and Lys266. Residue Asp239 coordinates L-methionine. Lys270 is an L-methionine binding site.

It belongs to the AdoMet synthase family. Homotetramer; dimer of dimers. Requires Mg(2+) as cofactor. K(+) serves as cofactor.

Its subcellular location is the cytoplasm. It catalyses the reaction L-methionine + ATP + H2O = S-adenosyl-L-methionine + phosphate + diphosphate. The protein operates within amino-acid biosynthesis; S-adenosyl-L-methionine biosynthesis; S-adenosyl-L-methionine from L-methionine: step 1/1. In terms of biological role, catalyzes the formation of S-adenosylmethionine (AdoMet) from methionine and ATP. The overall synthetic reaction is composed of two sequential steps, AdoMet formation and the subsequent tripolyphosphate hydrolysis which occurs prior to release of AdoMet from the enzyme. The protein is S-adenosylmethionine synthase of Haemophilus influenzae (strain PittGG).